Reading from the N-terminus, the 858-residue chain is DNA replication licensing factor mcm4-A (858 aa).

The interval 1–125 (MSSPTSTPSR…ARKVKQVDLH (125 aa)) is disordered. 2 stretches are compositionally biased toward polar residues: residues 54 to 68 (SPSG…SSPA) and 79 to 94 (LDLS…SSRV). A C4-type zinc finger spans residues 301 to 326 (CQVCAFTTRVEIDRGRIAEPSVCKHC). Residues 453-662 (IYERLAAALA…YDRRLAHHLV (210 aa)) form the MCM domain. Positions 466, 492, 511, 512, 613, 638, 727, and 730 each coordinate ATP. The short motif at 637 to 640 (SRFD) is the Arginine finger element.

This sequence belongs to the MCM family. In terms of assembly, component of the mcm2-7 complex (RLF-M). The complex forms a toroidal hexameric ring with the proposed subunit order mcm2-mcm6-mcm4-mcm7-mcm3-mcm5. The heterodimer of mmcm3/mcm5 interacts with mcm4, mmcm6, mcm7 and weakly with mcm2. Component of the CMG helicase complex, composed of the mcm2-7 complex, the GINS complex and cdc45. Hyperphosphorylated during mitosis in a mechanism requiring cdc2-cyclin B and other kinases. Undergoes dephosphorylation after exiting mitosis, existing in a partially phosphorylated state in the cytosolic interphase mcm complex which associates with the pre-replication complexes (pre-Rcs). Complete dephosphorylation inactivates the mcm complex, preventing its binding to chromatin. Becomes actively phosphorylated during S phase once the mcm complex is assembled on the chromatin. This chromatin-associated phosphorylation occurs during the activation of the pre-Rcs and is independent of cdks. Phosphorylated by the cdc7-dbf4b complex.

The protein resides in the nucleus. It localises to the chromosome. The catalysed reaction is ATP + H2O = ADP + phosphate + H(+). Its function is as follows. Acts as a component of the MCM2-7 complex (MCM complex) which is the replicative helicase essential for 'once per cell cycle' DNA replication initiation and elongation in eukaryotic cells. Core component of CDC45-MCM-GINS (CMG) helicase, the molecular machine that unwinds template DNA during replication, and around which the replisome is built. The active ATPase sites in the MCM2-7 ring are formed through the interaction surfaces of two neighboring subunits such that a critical structure of a conserved arginine finger motif is provided in trans relative to the ATP-binding site of the Walker A box of the adjacent subunit. The six ATPase active sites, however, are likely to contribute differentially to the complex helicase activity. The polypeptide is DNA replication licensing factor mcm4-A (mcm4-a) (Xenopus laevis (African clawed frog)).